The chain runs to 491 residues: Putative mannan endo-1,4-beta-mannosidase 5 (491 aa).

The signal sequence occupies residues 1-31 (METSYREEEARRKASLLHCIFFFLLGALAMA). Trp-134 and Asn-248 together coordinate substrate. Glu-249 serves as the catalytic Proton donor. Tyr-330 contributes to the substrate binding site. Glu-372 serves as the catalytic Nucleophile. An N-linked (GlcNAc...) asparagine glycan is attached at Asn-385. Position 416 (Trp-416) interacts with substrate. Asn-471 carries an N-linked (GlcNAc...) asparagine glycan.

It belongs to the glycosyl hydrolase 5 (cellulase A) family. Expression not detected.

The protein resides in the secreted. The enzyme catalyses Random hydrolysis of (1-&gt;4)-beta-D-mannosidic linkages in mannans, galactomannans and glucomannans.. In Oryza sativa subsp. japonica (Rice), this protein is Putative mannan endo-1,4-beta-mannosidase 5 (MAN5).